Here is a 569-residue protein sequence, read N- to C-terminus: Vacuolar protein sorting-associated protein 53 B (569 aa).

Coiled-coil stretches lie at residues 53–90 (TRAK…VQDI), 125–145 (QVMT…AINE), and 295–316 (KEKS…FERE).

This sequence belongs to the VPS53 family. Component of the Golgi-associated retrograde protein (GARP) complex.

It localises to the cytoplasm. Its subcellular location is the golgi apparatus. It is found in the trans-Golgi network membrane. The protein resides in the endosome membrane. In terms of biological role, involved in retrograde transport from early and late endosomes to late Golgi, leading to the membrane fusion between late Golgi and endosomal vesicles. The polypeptide is Vacuolar protein sorting-associated protein 53 B (Arabidopsis thaliana (Mouse-ear cress)).